The chain runs to 388 residues: Mycinamicin VIII C21 methyl hydroxylase (388 aa).

Heme contacts are provided by histidine 87, arginine 91, arginine 279, histidine 335, and cysteine 337.

Belongs to the cytochrome P450 family. The cofactor is heme.

It participates in antibiotic biosynthesis; mycinamicin biosynthesis. Involved in the biosynthesis of mycinamicin, a 16-membered macrolide antibiotic. Catalyzes hydroxylation at the C21 methyl group of mycinamicin VIII, the earliest macrolide form in the postpolyketide synthase tailoring pathway, leading to mycinamicin VII. Uses ferredoxin MycCII in electron transfer for catalysis. This is Mycinamicin VIII C21 methyl hydroxylase from Micromonospora griseorubida.